A 94-amino-acid polypeptide reads, in one-letter code: DNA-directed RNA polymerase subunit omega (94 aa).

Belongs to the RNA polymerase subunit omega family. As to quaternary structure, the RNAP catalytic core consists of 2 alpha, 1 beta, 1 beta' and 1 omega subunit. When a sigma factor is associated with the core the holoenzyme is formed, which can initiate transcription.

The catalysed reaction is RNA(n) + a ribonucleoside 5'-triphosphate = RNA(n+1) + diphosphate. Functionally, promotes RNA polymerase assembly. Latches the N- and C-terminal regions of the beta' subunit thereby facilitating its interaction with the beta and alpha subunits. In Shewanella pealeana (strain ATCC 700345 / ANG-SQ1), this protein is DNA-directed RNA polymerase subunit omega.